A 250-amino-acid polypeptide reads, in one-letter code: Phosphonates import ATP-binding protein PhnC (250 aa).

One can recognise an ABC transporter domain in the interval 2-247; that stretch reads IVFNNVNKVW…KLDAQAMKKI (246 aa). 35–42 is a binding site for ATP; the sequence is GLSGAGKT.

Belongs to the ABC transporter superfamily. Phosphonates importer (TC 3.A.1.9.1) family. The complex is composed of two ATP-binding proteins (PhnC), two transmembrane proteins (PhnE) and a solute-binding protein (PhnD).

The protein resides in the cell membrane. The enzyme catalyses phosphonate(out) + ATP + H2O = phosphonate(in) + ADP + phosphate + H(+). Functionally, part of the ABC transporter complex PhnCDE involved in phosphonates import. Responsible for energy coupling to the transport system. The protein is Phosphonates import ATP-binding protein PhnC of Mycoplasma mycoides subsp. mycoides SC (strain CCUG 32753 / NCTC 10114 / PG1).